A 209-amino-acid polypeptide reads, in one-letter code: uncharacterized protein (209 aa).

This is an uncharacterized protein from Klebsiella pneumoniae.